A 338-amino-acid polypeptide reads, in one-letter code: Phenylalanine--tRNA ligase alpha subunit (338 aa).

A Mg(2+)-binding site is contributed by Glu-252.

It belongs to the class-II aminoacyl-tRNA synthetase family. Phe-tRNA synthetase alpha subunit type 1 subfamily. In terms of assembly, tetramer of two alpha and two beta subunits. It depends on Mg(2+) as a cofactor.

It localises to the cytoplasm. The enzyme catalyses tRNA(Phe) + L-phenylalanine + ATP = L-phenylalanyl-tRNA(Phe) + AMP + diphosphate + H(+). The polypeptide is Phenylalanine--tRNA ligase alpha subunit (Pseudomonas putida (strain ATCC 700007 / DSM 6899 / JCM 31910 / BCRC 17059 / LMG 24140 / F1)).